We begin with the raw amino-acid sequence, 1117 residues long: Sodium-driven chloride bicarbonate exchanger (1117 aa).

Disordered stretches follow at residues 1–23 (MEIK…EEAV) and 58–97 (GRKS…TPSQ). Residues 1-508 (MEIKDQGAQM…DFRDAFSLQC (508 aa)) lie on the Cytoplasmic side of the membrane. The segment covering 59–76 (RKSHRRHRHRGHKHRKRD) has biased composition (basic residues). Phosphoserine is present on Ser89. Thr94 is modified (phosphothreonine). At Ser275 the chain carries Phosphoserine. Disordered stretches follow at residues 282–309 (DFSK…KGPP) and 431–476 (WDPS…PELQ). Residues 509–529 (LASFLFLYCACMSPVITFGGL) traverse the membrane as a helical segment. Topologically, residues 530–537 (LGEATEGR) are extracellular. Residues 538–558 (ISAIESLFGASMTGIAYSLFG) traverse the membrane as a helical segment. Over 559–561 (GQP) the chain is Cytoplasmic. The helical transmembrane segment at 562–582 (LTILGSTGPVLVFEKILFKFC) threads the bilayer. Over 583-595 (KEYGLSYLSLRAS) the chain is Extracellular. A helical transmembrane segment spans residues 596 to 616 (IGLWTATLCIILVATDASSLV). Residues 617 to 625 (CYITRFTEE) are Cytoplasmic-facing. The chain crosses the membrane as a helical span at residues 626 to 646 (AFASLICIIFIYEALEKLFEL). Over 647–719 (SESYPINMHN…VGRACGHGHP (73 aa)) the chain is Extracellular. N-linked (GlcNAc...) asparagine glycosylation is found at Asn676, Asn686, and Asn696. Residues 720-740 (YVPDVLFWSVILFFSTVTMSA) traverse the membrane as a helical segment. Residues 741–761 (TLKQFKTSRYFPTKVRSIVSD) are Cytoplasmic-facing. Residues 762–782 (FAVFLTILCMVLIDYAIGIPS) form a helical membrane-spanning segment. Topologically, residues 783 to 808 (PKLQVPSVFKPTRDDRGWFVTPLGPN) are extracellular. A helical membrane pass occupies residues 809–829 (PWWTIIAAIIPALLCTILIFM). Residues 830 to 854 (DQQITAVIINRKEHKLKKGCGYHLD) lie on the Cytoplasmic side of the membrane. A helical transmembrane segment spans residues 855-875 (LLMVAVMLGVCSIMGLPWFVA). Residues 876 to 911 (ATVLSITHVNSLKLESECSAPGEQPKFLGIREQRVT) lie on the Extracellular side of the membrane. The helical transmembrane segment at 912 to 932 (GLMIFILMGSSVFMTSILKFI) threads the bilayer. Over 933 to 934 (PM) the chain is Cytoplasmic. Residues 935-955 (PVLYGVFLYMGASSLKGIQLF) traverse the membrane as a helical segment. Residues 956–997 (DRIKLFWMPAKHQPDFIYLRHVPLRKVHLFTVIQMSCLGLLW) lie on the Extracellular side of the membrane. A helical transmembrane segment spans residues 998–1018 (IIKVSRAAIVFPMMVLALVFV). The Cytoplasmic segment spans residues 1019–1117 (RKLMDFLFTK…SRFPSKSSPS (99 aa)). A phosphoserine mark is found at Ser1056 and Ser1084.

Belongs to the anion exchanger (TC 2.A.31) family. Post-translationally, N-glycosylated. As to expression, in the brain, detected in cerebral cortex, subcortex, cerebellum, hippocampus and medulla (at protein level). Expressed in neurons but not in astrocytes (at protein level). Isoforms starting with Met-Glu-Ile-Lys are found predominantly in the brain with lower levels in the eye while isoforms starting with Met-Cys-Asp-Leu are most abundant in the kidney with lower levels in the duodenum, jejunum and ileum (at protein level). In the kidney, isoforms starting with Met-Cys-Asp-Leu are primarily expressed in the cortex, the outer stripe of the outer medulla and the inner stripe of the outer medulla (ISOM) but are not detectable in the inner medulla (IM) while isoforms starting with Met-Glu-Ile-Lys are predominantly expressed in the ISOM and IM. Expressed in the brain, in the hippocampus as well as in dentate gyrus, cortical layers, cerebellum, olfactory bulb and in the epithelial cells of the choroid plexus. Detected in pituitary, testis, kidney and ileum. Detected also in spleen and lung. In terms of tissue distribution, mainly expressed in the jejenum (at protein level).

It localises to the basolateral cell membrane. It is found in the apical cell membrane. Its subcellular location is the cell projection. The protein resides in the dendrite. The protein localises to the axon. It localises to the perikaryon. It is found in the presynapse. Its subcellular location is the postsynapse. It catalyses the reaction 2 hydrogencarbonate(out) + chloride(in) + Na(+)(out) = 2 hydrogencarbonate(in) + chloride(out) + Na(+)(in). Functionally, sodium/bicarbonate cotransporter which plays an important role in regulating intracellular pH. Has been shown to act as a sodium/bicarbonate cotransporter in exchange for intracellular chloride. Has also been shown to act as a sodium/biocarbonate cotransporter which does not couple net influx of bicarbonate to net efflux of chloride, with the observed chloride efflux being due to chloride self-exchange. Controls neuronal pH and may contribute to the secretion of cerebrospinal fluid. Acting on presynaptic intracellular pH, it promotes GABA release, reduces the excitability of CA1 pyramidal neurons, and modulates short-term synaptic plasticity. Required in retinal cells to maintain normal pH which is necessary for normal vision. In the kidney, likely to mediate bicarbonate reclamation in the apical membrane of the proximal tubules. Its function is as follows. Sodium/bicarbonate cotransporter which mediates cotransport of sodium and bicarbonate in association with an efflux of intracellular chloride and is involved in NaCl absorption in the small intestine. This is Sodium-driven chloride bicarbonate exchanger from Rattus norvegicus (Rat).